We begin with the raw amino-acid sequence, 502 residues long: MLHVNFTEEESLNTQALIVFIDDKLKLDSELINLDQQHHGLISKTIANKLQFTGKYGQIKIIPSVVKSGEVKYLVLAGLGSEEKLTEVKIEELGGKILQNVTNAKIATIGLKIKNRISNFTSSHVASLIASGALLASYRFDKYRTTLKEADKFVVESFEISTDNNAEATKLFEVKKLIAEGVFFTRDISNEPSNIKTPQIYAERIADILEELNVDVSILGEREMKNLGMGALLGVGQGSQNESKLVVMEYQGANKDAPYIALVGKGVIFDTGGISLKPSNNMHLMRYDMCGSAAVVGTMIAVASQELPVNIVGVVGLVENMPSGNAQRPGDVVTTMSGQTAEVLNTDAEGRLVLADAVWYAQEKFKPKCVIDVATLTGAIVVSLGPTYAGCFSNNDELADKLIKAGEEVNEKLWRMPLHEDYDAMINSDIADMANIGNVPGAAGSSTAAHFIKRFIQEGVEWAHLDIAGVANSNKPSSLGPKGAVGYGVRLLEKFIKENYEQ.

Residues K265 and D270 each coordinate Mn(2+). K277 is a catalytic residue. Residues D288, D347, and E349 each contribute to the Mn(2+) site. Residue R351 is part of the active site.

It belongs to the peptidase M17 family. The cofactor is Mn(2+).

It localises to the cytoplasm. It catalyses the reaction Release of an N-terminal amino acid, Xaa-|-Yaa-, in which Xaa is preferably Leu, but may be other amino acids including Pro although not Arg or Lys, and Yaa may be Pro. Amino acid amides and methyl esters are also readily hydrolyzed, but rates on arylamides are exceedingly low.. The catalysed reaction is Release of an N-terminal amino acid, preferentially leucine, but not glutamic or aspartic acids.. Presumably involved in the processing and regular turnover of intracellular proteins. Catalyzes the removal of unsubstituted N-terminal amino acids from various peptides. The sequence is that of Probable cytosol aminopeptidase from Rickettsia bellii (strain RML369-C).